The following is a 642-amino-acid chain: Tigger transposable element derived 5 (642 aa).

A disordered region spans residues 1–54; sequence MYPASPSAGPALHPVPHRARLPRPRCLAEPPRSPAPGPGSTARPPPPAPGPRPR. Residues 31–52 are compositionally biased toward pro residues; the sequence is PRSPAPGPGSTARPPPPAPGPR. Residues 56–107 enclose the HTH psq-type domain; sequence AVKMTFRKAYSIKDKLQAIERVKGGERQASVCRDFGVPGGTLRGWLKDEPKL. 2 consecutive DNA-binding regions (H-T-H motif) follow at residues 83-103 and 154-187; these read QASVCRDFGVPGGTLRGWLKD and PVIQAQAEAFARQIYGPECTFKASHGWFWRWQKR. Residues 121-194 enclose the HTH CENPB-type domain; sequence QRKKMRLANE…QKRHGISSQR (74 aa). A compositionally biased stretch (low complexity) spans 198 to 208; that stretch reads EAEPPVAGPAP. A disordered region spans residues 198–230; it reads EAEPPVAGPAPVKEEPAQPSSAGLLLDGTPATL. In terms of domain architecture, DDE-1 spans 239–364; that stretch reads DEQIYNANVT…CLQQKAVLLV (126 aa). Positions 543 to 583 are disordered; sequence GLPEGCGEEVAPAAPPSPASLPSSIGAGEEEEEEATEQGGV.

Belongs to the tigger transposable element derived protein family.

Its subcellular location is the nucleus. The polypeptide is Tigger transposable element derived 5 (Tigd5) (Rattus norvegicus (Rat)).